We begin with the raw amino-acid sequence, 153 residues long: ORM1-like protein 3 (153 aa).

The interval 1-17 (MNVGTAHSEVNPNTRVM) is important for ceramide level-sensing. The Cytoplasmic segment spans residues 1 to 21 (MNVGTAHSEVNPNTRVMNSRG). A run of 2 helical transmembrane segments spans residues 22–42 (IWLS…SIPF) and 43–63 (VSVP…MYIF). Topologically, residues 64–94 (LHTVKGTPFETPDQGKARLLTHWEQMDYGVQ) are cytoplasmic. The helical transmembrane segment at 95–117 (FTASRKFLTITPIVLYFLTSFYT) threads the bilayer. Residues 118-121 (KYDQ) are Extracellular-facing. The helical transmembrane segment at 122 to 142 (VHFILNTVSLMSVLIPKLPQL) threads the bilayer. Pro137 bears the Hydroxyproline mark. Topologically, residues 143 to 153 (HGVRIFGINKY) are cytoplasmic.

It belongs to the ORM family. Ceramide-sensitive subunit of the serine palmitoyltransferase (SPT) complex, which is also composed of SPTLC1, SPTLC2/3 and SPTSSA/B. When hydroxylated at Pro-137, ubiquitinated via 'Lys-48'-linkage, leading to proteasomal degradation. In endothelial cells, ORMDL3 proteasomal degradation is controlled by the sphingosine 1-phosphate receptor signaling pathway.

The protein resides in the endoplasmic reticulum membrane. Functionally, plays an essential role in the homeostatic regulation of sphingolipid de novo biosynthesis by modulating the activity of the serine palmitoyltransferase (SPT) in response to ceramide levels. When complexed to SPT, the binding of ceramides to its N-terminus stabilizes a conformation that block SPT substrate entry, hence preventing SPT catalytic activity. Through this mechanism, maintains ceramide levels at sufficient concentrations for the production of complex sphingolipids, but which prevents the accumulation of ceramides to levels that trigger apoptosis. This is ORM1-like protein 3 (Ormdl3) from Rattus norvegicus (Rat).